Reading from the N-terminus, the 146-residue chain is Villin-like protein ABP41 (146 aa).

This sequence belongs to the villin/gelsolin family. As to quaternary structure, binds to actin. Expressed in pollen (at protein level).

Its subcellular location is the cytoplasm. It is found in the cytoskeleton. Ca(2+)-dependent actin filament-severing protein that is required for pollen tube growth. Probably regulates the dynamics of the actin cytoskeleton. It can promote the assembly of monomers into filaments (nucleation) as well as sever filaments already formed. This Lilium davidii (David's lily) protein is Villin-like protein ABP41.